Reading from the N-terminus, the 206-residue chain is FMN-dependent NADH:quinone oxidoreductase 2 (206 aa).

Ser10 is a binding site for FMN.

Belongs to the azoreductase type 1 family. As to quaternary structure, homodimer. Requires FMN as cofactor.

The enzyme catalyses 2 a quinone + NADH + H(+) = 2 a 1,4-benzosemiquinone + NAD(+). It carries out the reaction N,N-dimethyl-1,4-phenylenediamine + anthranilate + 2 NAD(+) = 2-(4-dimethylaminophenyl)diazenylbenzoate + 2 NADH + 2 H(+). In terms of biological role, quinone reductase that provides resistance to thiol-specific stress caused by electrophilic quinones. Functionally, also exhibits azoreductase activity. Catalyzes the reductive cleavage of the azo bond in aromatic azo compounds to the corresponding amines. The sequence is that of FMN-dependent NADH:quinone oxidoreductase 2 from Rhizobium etli (strain ATCC 51251 / DSM 11541 / JCM 21823 / NBRC 15573 / CFN 42).